Here is an 844-residue protein sequence, read N- to C-terminus: Rho guanine nucleotide exchange factor 33 (844 aa).

Composition is skewed to basic and acidic residues over residues 1–13 (MEKTKTKQGENEH) and 101–113 (QQKIEQLQQEKRR). Disordered stretches follow at residues 1–20 (MEKTKTKQGENEHMPVNNPS), 101–142 (QQKI…GSPF), and 169–189 (AQESRSVHVGDSNVKGMMGPG). Residues 54–129 (LEEKVKSCRC…AKKTQKEEHS (76 aa)) adopt a coiled-coil conformation. Over residues 130 to 142 (SQAGPAQAQGSPF) the composition is skewed to polar residues. Positions 265–440 (KRQTVALELL…RVFISHYTLL (176 aa)) constitute a DH domain. 3 disordered regions span residues 498 to 541 (LQPY…DWEL), 668 to 687 (RPEHPLQPLPKSATSPAGSS), and 702 to 745 (AKPL…RAAQ). The residue at position 757 (arginine 757) is an Omega-N-methylarginine. The span at 787 to 800 (DTTRFCPKEERESE) shows a compositional bias: basic and acidic residues. The disordered stretch occupies residues 787–844 (DTTRFCPKEERESEQTSFSDQNPRQDQKGGFRSSFRKLFKKKNGNATGEDFCGPWGWW). Over residues 820–829 (SFRKLFKKKN) the composition is skewed to basic residues.

Its function is as follows. May act as a guanine-nucleotide releasing factor. This chain is Rho guanine nucleotide exchange factor 33 (ARHGEF33), found in Homo sapiens (Human).